The following is a 491-amino-acid chain: Probable malate:quinone oxidoreductase (491 aa).

Belongs to the MQO family. FAD is required as a cofactor.

The catalysed reaction is (S)-malate + a quinone = a quinol + oxaloacetate. It participates in carbohydrate metabolism; tricarboxylic acid cycle; oxaloacetate from (S)-malate (quinone route): step 1/1. This is Probable malate:quinone oxidoreductase from Actinobacillus pleuropneumoniae serotype 5b (strain L20).